Here is a 316-residue protein sequence, read N- to C-terminus: MTNEFHHVTVLLHETVDMLDIKPDGIYVDATLGGAGHSSYLLSQLSEKGHLYCFDQDQKAIDNAQVRLKDYIDKGMVTFIKDNFRNLKSNLEALGVSEIDGILYDLGVSSPQLDERERGFSYKQDAKLDMRMNEEASLTAYDVVNTYPYNDLVRIFFKYGEDKFSKQIARKIEQARQVKPIETTTELAEIIKSAKPAKELKKKGHPAKQIFQAIRIEVNDELGAADESIQEALDLLAVNGRISVITFHSLEDRLTKQLFKEASTADVPKGLPFIPEDLQPKVALVNRKPILPSQEELEANNRSHSAKLRVAKKIRK.

Residues 35–37 (AGH), D55, F84, D105, and Q112 contribute to the S-adenosyl-L-methionine site.

The protein belongs to the methyltransferase superfamily. RsmH family.

It localises to the cytoplasm. It catalyses the reaction cytidine(1402) in 16S rRNA + S-adenosyl-L-methionine = N(4)-methylcytidine(1402) in 16S rRNA + S-adenosyl-L-homocysteine + H(+). Specifically methylates the N4 position of cytidine in position 1402 (C1402) of 16S rRNA. The protein is Ribosomal RNA small subunit methyltransferase H of Streptococcus thermophilus (strain ATCC BAA-250 / LMG 18311).